Reading from the N-terminus, the 403-residue chain is Argininosuccinate synthase (403 aa).

ATP-binding positions include 13 to 21 (AYSGGLDTS) and alanine 40. L-citrulline-binding residues include tyrosine 91 and serine 96. Glycine 121 serves as a coordination point for ATP. The L-aspartate site is built by threonine 123, asparagine 127, and aspartate 128. An L-citrulline-binding site is contributed by asparagine 127. L-citrulline-binding residues include arginine 131, serine 180, serine 189, glutamate 265, and tyrosine 277.

This sequence belongs to the argininosuccinate synthase family. Type 1 subfamily. In terms of assembly, homotetramer.

Its subcellular location is the cytoplasm. It catalyses the reaction L-citrulline + L-aspartate + ATP = 2-(N(omega)-L-arginino)succinate + AMP + diphosphate + H(+). It participates in amino-acid biosynthesis; L-arginine biosynthesis; L-arginine from L-ornithine and carbamoyl phosphate: step 2/3. In Leptospira borgpetersenii serovar Hardjo-bovis (strain JB197), this protein is Argininosuccinate synthase.